The sequence spans 287 residues: MQTATRLERMHGHLALDFTLKQQRTRLTVREHRPPLQVVRDFGLADGTSFVHLHNVAGGVLAGDQLTTTIKLAASTKAQLTTTSSTRIYRSDGEQIAYQQVQATLAEQSLLEYWPDTTIPFAESLYQQQTRIDLAADAGLCWWEFLAPGREAYGERFAYRQLRLDCDIYALGRPILLDRMRLQPSLQQLSNPLYFGKYSYLATGYICRVGWDAVQWKALEAELMAFAASQTKLGRCLWGVSCLAAHGLVIRGLSSNSRDLLATAFDYWRFAKQALYGTTPNLPRKIY.

It belongs to the UreD family. UreD, UreF and UreG form a complex that acts as a GTP-hydrolysis-dependent molecular chaperone, activating the urease apoprotein by helping to assemble the nickel containing metallocenter of UreC. The UreE protein probably delivers the nickel.

It is found in the cytoplasm. Its function is as follows. Required for maturation of urease via the functional incorporation of the urease nickel metallocenter. In Herpetosiphon aurantiacus (strain ATCC 23779 / DSM 785 / 114-95), this protein is Urease accessory protein UreD.